Consider the following 402-residue polypeptide: ORC1-type DNA replication protein 17 (402 aa).

ATP is bound by residues tyrosine 223 and arginine 235.

Belongs to the CDC6/cdc18 family.

Involved in regulation of DNA replication. The sequence is that of ORC1-type DNA replication protein 17 (cdc6q) from Haloarcula marismortui (strain ATCC 43049 / DSM 3752 / JCM 8966 / VKM B-1809) (Halobacterium marismortui).